The chain runs to 448 residues: Proline-rich protein 4 (448 aa).

An N-terminal signal peptide occupies residues 1-29 (MRILPEPRGSVPCLLLLVSVLLSATLSLA). Repeat copies occupy residues 152–156 (PMPKL), 157–161 (PPFKG), 165–169 (PFPLP), 170–174 (PPLEL), 175–179 (PPFLK), 183–187 (PPKYS), 188–193 (PPVEVP), 194–198 (PPVPV), 201–205 (PPPKK), 208–212 (PPPVP), 216–220 (PPPKK), 222–226 (VPPPV), 227–231 (PVYKP), 232–236 (PPKVE), 238–242 (PPPIP), 245–249 (PCPPK), 250–254 (PPKIE), 256–259 (PPPV), 260–264 (PVYKP), 265–270 (PPKIEK), 271–278 (PPPVPVYK), 279–284 (PPPKIE), 286–294 (PPPVPVHKL), 295–299 (PKKPC), 300–304 (PPKKV), 306–311 (PPPVPV), 314–320 (PPTKKPC), 321–327 (PPKKVDP), 328–334 (PPVPVHK), 335–341 (PPPKIVI), 342–348 (PPPKIEH), 349–356 (PPPVPVYK), 357–363 (PPPKIEH), 364–368 (PPIYI), 369–374 (PPIVKK), 378–384 (PPVPIYK), 385–389 (PPVVI), 390–394 (PKKPC), 395–402 (PPPVPVYK), 403–407 (PPVVV), 409–413 (PKKPC), 414–419 (PPLPQL), 420–424 (PPLPK), 425–429 (FPPLP), 430–434 (PKYIH), and 442–446 (PPLPP). Positions 152–446 (PMPKLPPFKG…KFGKWPPLPP (295 aa)) are 46 X 5 AA approximate repeats. Pro residues predominate over residues 240–290 (PIPKKPCPPKPPKIEHPPPVPVYKPPPKIEKPPPVPVYKPPPKIEHPPPVP). A disordered region spans residues 240–345 (PIPKKPCPPK…PPKIVIPPPK (106 aa)). Pro residues-rich tracts occupy residues 306 to 319 (PPPVPVHKPPTKKP) and 327 to 345 (PPPVPVHKPPPKIVIPPPK).

It belongs to the plant proline-rich protein superfamily. As to expression, mostly expressed in aerial organs, particularly in expanding leaves, stems, flowers, and siliques. Also present in stipules.

Its subcellular location is the secreted. The protein localises to the cell wall. In Arabidopsis thaliana (Mouse-ear cress), this protein is Proline-rich protein 4 (PRP4).